Reading from the N-terminus, the 827-residue chain is Protein SEY1 (827 aa).

The tract at residues 1–26 (MSQSSPSNAETDEDLSTTSSSSSFVP) is disordered. At 1–719 (MSQSSPSNAE…KRSIVQHVTQ (719 aa)) the chain is on the cytoplasmic side. The 229-residue stretch at 63 to 291 (GNNYHIISVF…VKKDLFRPNY (229 aa)) folds into the GB1/RHD3-type G domain. 73–80 (GSQSTGKS) lines the GTP pocket. Coiled-coil stretches lie at residues 389–409 (KSVY…KFRE) and 472–492 (VSNL…VELK). Residues 720-740 (IPYYIYLVIMVLGWNEFMAIV) traverse the membrane as a helical segment. The Lumenal segment spans residues 741 to 743 (RNP). The helical transmembrane segment at 744–764 (LFFSLVLVFGAGLYILYSMNL) threads the bilayer. Residues 765–827 (LKPAMVVVQR…VVETIEMQDL (63 aa)) lie on the Cytoplasmic side of the membrane. A coiled-coil region spans residues 803–823 (QKISASNREKVEEEKVVETIE).

It belongs to the TRAFAC class dynamin-like GTPase superfamily. GB1/RHD3 GTPase family. RHD3 subfamily.

The protein localises to the endoplasmic reticulum membrane. Functionally, cooperates with the reticulon proteins and tubule-shaping DP1 family proteins to generate and maintain the structure of the tubular endoplasmic reticulum network. Has GTPase activity, which is required for its function in ER organization. The protein is Protein SEY1 of Scheffersomyces stipitis (strain ATCC 58785 / CBS 6054 / NBRC 10063 / NRRL Y-11545) (Yeast).